The sequence spans 485 residues: Ribulose bisphosphate carboxylase large chain (485 aa).

The substrate site is built by N124 and T174. K176 serves as the catalytic Proton acceptor. K178 provides a ligand contact to substrate. The Mg(2+) site is built by K202, D204, and E205. K202 is subject to N6-carboxylysine. The active-site Proton acceptor is the H294. R295, H327, and S379 together coordinate substrate.

It belongs to the RuBisCO large chain family. Type I subfamily. In terms of assembly, heterohexadecamer of 8 large chains and 8 small chains. Mg(2+) is required as a cofactor.

It carries out the reaction 2 (2R)-3-phosphoglycerate + 2 H(+) = D-ribulose 1,5-bisphosphate + CO2 + H2O. It catalyses the reaction D-ribulose 1,5-bisphosphate + O2 = 2-phosphoglycolate + (2R)-3-phosphoglycerate + 2 H(+). Functionally, ruBisCO catalyzes two reactions: the carboxylation of D-ribulose 1,5-bisphosphate, the primary event in carbon dioxide fixation, as well as the oxidative fragmentation of the pentose substrate in the photorespiration process. Both reactions occur simultaneously and in competition at the same active site. The chain is Ribulose bisphosphate carboxylase large chain from Rhodopseudomonas palustris (strain BisB18).